The chain runs to 245 residues: 2-C-methyl-D-erythritol 4-phosphate cytidylyltransferase (245 aa).

This sequence belongs to the IspD/TarI cytidylyltransferase family. IspD subfamily.

The enzyme catalyses 2-C-methyl-D-erythritol 4-phosphate + CTP + H(+) = 4-CDP-2-C-methyl-D-erythritol + diphosphate. It functions in the pathway isoprenoid biosynthesis; isopentenyl diphosphate biosynthesis via DXP pathway; isopentenyl diphosphate from 1-deoxy-D-xylulose 5-phosphate: step 2/6. Catalyzes the formation of 4-diphosphocytidyl-2-C-methyl-D-erythritol from CTP and 2-C-methyl-D-erythritol 4-phosphate (MEP). This is 2-C-methyl-D-erythritol 4-phosphate cytidylyltransferase from Chloroherpeton thalassium (strain ATCC 35110 / GB-78).